A 350-amino-acid polypeptide reads, in one-letter code: Heat-inducible transcription repressor HrcA (350 aa).

Belongs to the HrcA family.

Negative regulator of class I heat shock genes (grpE-dnaK-dnaJ and groELS operons). Prevents heat-shock induction of these operons. This is Heat-inducible transcription repressor HrcA from Methylococcus capsulatus (strain ATCC 33009 / NCIMB 11132 / Bath).